The primary structure comprises 108 residues: Cell division protein FtsL (108 aa).

Over 1–24 (MSKDTASQPSLTKLIGLDIFGVGR) the chain is Cytoplasmic. Residues 25-45 (LHAILLICIFLSAIGVVLATH) traverse the membrane as a helical segment. Over 46-108 (NTRQMTVQRE…PDKEVIIKLR (63 aa)) the chain is Periplasmic.

The protein belongs to the FtsL family. Part of a complex composed of FtsB, FtsL and FtsQ.

The protein resides in the cell inner membrane. In terms of biological role, essential cell division protein. May link together the upstream cell division proteins, which are predominantly cytoplasmic, with the downstream cell division proteins, which are predominantly periplasmic. This Aliivibrio fischeri (strain ATCC 700601 / ES114) (Vibrio fischeri) protein is Cell division protein FtsL.